Reading from the N-terminus, the 373-residue chain is D-alanine--D-alanine ligase (373 aa).

Positions 165-369 constitute an ATP-grasp domain; it reads KRLAREAGIP…FGDLVSALIA (205 aa). 192–247 contributes to the ATP binding site; it reads KERLGLPVFVKPARGGSSIGISKVDSWEEFDAAIDLAFSNDNKVIVEAMIHGAEVE. Residues Asp-324, Glu-336, and Asn-338 each coordinate Mg(2+).

Belongs to the D-alanine--D-alanine ligase family. Requires Mg(2+) as cofactor. It depends on Mn(2+) as a cofactor.

Its subcellular location is the cytoplasm. It carries out the reaction 2 D-alanine + ATP = D-alanyl-D-alanine + ADP + phosphate + H(+). The protein operates within cell wall biogenesis; peptidoglycan biosynthesis. Cell wall formation. The protein is D-alanine--D-alanine ligase of Corynebacterium jeikeium (strain K411).